Consider the following 250-residue polypeptide: ADPR responsive transcriptional repressor NtrR (250 aa).

Residues 26–157 enclose the Nudix hydrolase domain; that stretch reads LMTVDMAIFS…DHHDLLQQAF (132 aa). A Nudix box motif is present at residues 62–85; it reads GFVDLEQDQNLMACAHRKLLEKTG. The interval 164–237 is winged helix-like DNA-binding region; that stretch reads TRYTALPISL…RFALQDYDFN (74 aa).

Its activity is regulated as follows. DNA binding is efficiently suppressed in the presence of ADP-ribose (ADPR) or phospho-ADPR. Accumulation of ADPR resulting from NAD degradation may be interpreted by the cell as a signal to activate recycling of nicotinamide. Its function is as follows. Involved in the transcriptional regulation of the nondeamidating salvage pathway for production of NAD from nicotinamide. Represses expression of the prs-nadV-nrtR operon by binding to the DNA region located upstream of the operon, thus blocking the nondeamidating pathway. This chain is ADPR responsive transcriptional repressor NtrR, found in Acinetobacter baylyi (strain ATCC 33305 / BD413 / ADP1).